A 375-amino-acid polypeptide reads, in one-letter code: tRNA/tmRNA (uracil-C(5))-methyltransferase (375 aa).

Positions 197, 225, 230, 246, and 306 each coordinate S-adenosyl-L-methionine. The active-site Nucleophile is the Cys-331. Residue Glu-365 is the Proton acceptor of the active site.

It belongs to the class I-like SAM-binding methyltransferase superfamily. RNA M5U methyltransferase family. TrmA subfamily.

The enzyme catalyses uridine(54) in tRNA + S-adenosyl-L-methionine = 5-methyluridine(54) in tRNA + S-adenosyl-L-homocysteine + H(+). It carries out the reaction uridine(341) in tmRNA + S-adenosyl-L-methionine = 5-methyluridine(341) in tmRNA + S-adenosyl-L-homocysteine + H(+). Its function is as follows. Dual-specificity methyltransferase that catalyzes the formation of 5-methyluridine at position 54 (m5U54) in all tRNAs, and that of position 341 (m5U341) in tmRNA (transfer-mRNA). This is tRNA/tmRNA (uracil-C(5))-methyltransferase from Aliarcobacter butzleri (strain RM4018) (Arcobacter butzleri).